Reading from the N-terminus, the 448-residue chain is KSNGMVSEGHAYFSQQLNFETPIRTENGTEISMIKMTVKSRVLLXGTVALIYPSPESIDFQGLFVKLFLSKPSPPVLSLNETTDAGQFSLNDTNEDPFAPLSRSRRAVSNSXNANASLVSEILERIGPVCLFFDRQFQLYSLNVNSVNLTLSASVSVQIDGPHTSRIDVSLVLSVGQNLTSVVIQKFVRMVSLQELSDVNLNFPPIFRFLRGSTSFLESNTDVRGRLVVLARFRLSLPLQNNSVDPPRLNLKIEPYAVIVVRRLIVAMSVBXIQQXVXARXVVXXSGPKVTLSFNDDQLCVTVSDRVIGPDVPVTFFRRLRVCRRIPRVGRLWVRTRRGWRLRRIFTFSRRCFWVIISGFRGRLSPTVTQEGFVRVCNITKAANPSILLPTPTSQIAQSISTAQMVSSTSASIFATPVLALQSSSLRISPASTAPTSATVSSPVASIS.

In terms of tissue distribution, component of the acid-insoluble and acid-soluble organic matrix of the aragonitic skeleton (at protein level).

It localises to the secreted. This is an uncharacterized protein from Acropora millepora (Staghorn coral).